A 329-amino-acid polypeptide reads, in one-letter code: Oligopeptide transport ATP-binding protein AppF (329 aa).

In terms of domain architecture, ABC transporter spans 10–261 (LELRDVKKYF…PLHPYTQALL (252 aa)). 53 to 60 (GESGCGKS) is a binding site for ATP.

It belongs to the ABC transporter superfamily.

It is found in the cell membrane. This protein is a component of an oligopeptide permease, a binding protein-dependent transport system. This APP system can completely substitute for the OPP system in both sporulation and genetic competence, though, unlike OPP, is incapable of transporting tripeptides. Probably responsible for energy coupling to the transport system. This is Oligopeptide transport ATP-binding protein AppF (appF) from Bacillus subtilis (strain 168).